Reading from the N-terminus, the 333-residue chain is Ornithine carbamoyltransferase (333 aa).

Residues 56 to 59 (STRT), Arg107, and 134 to 137 (HPTQ) each bind carbamoyl phosphate. Residues Asn167, Asp231, and 235-236 (SM) each bind L-ornithine. Residues 273 to 274 (CL) and Arg318 contribute to the carbamoyl phosphate site.

The protein belongs to the aspartate/ornithine carbamoyltransferase superfamily. OTCase family.

It localises to the cytoplasm. The enzyme catalyses carbamoyl phosphate + L-ornithine = L-citrulline + phosphate + H(+). Its pathway is amino-acid degradation; L-arginine degradation via ADI pathway; carbamoyl phosphate from L-arginine: step 2/2. Its function is as follows. Reversibly catalyzes the transfer of the carbamoyl group from carbamoyl phosphate (CP) to the N(epsilon) atom of ornithine (ORN) to produce L-citrulline. This chain is Ornithine carbamoyltransferase, found in Clostridium botulinum (strain 657 / Type Ba4).